A 241-amino-acid polypeptide reads, in one-letter code: MSGHSKWNNIQGRKNAQDSKRSKVFQKLAREIFVAAKKGPDPNLNPSLRLVMDKAKAVNMPNDNIKRAIDKAAGNTSGENYDEVTYEGYAPGGIAVLVHALTDNKNRTSTNVRVAFNKNGGSLGETGSVSYMFDRKGYLVILREGLDVDEEEFMLEAIEAGADDVEVSEDVFEIFTDPATFPEVKEALQEAGYTFATAELSMFPTVYNEVAENNQTQFDKMLEALEDDDDVQEVYTNAEIN.

Residues 1–14 show a composition bias toward polar residues; the sequence is MSGHSKWNNIQGRK. Residues 1 to 22 are disordered; that stretch reads MSGHSKWNNIQGRKNAQDSKRS.

It belongs to the TACO1 family.

It localises to the cytoplasm. The polypeptide is Probable transcriptional regulatory protein LMOf2365_1554 (Listeria monocytogenes serotype 4b (strain F2365)).